The following is a 512-amino-acid chain: MDAGRRRLVINDCMKPERGRRSPLPRRPTRPPDERSSGIGNLAMTPAKLHMTTSLAPIAVHSPYDGSLLGSVEATDPADIDRLLATARRGAEISRNLPRHKRASILEGAAQMVESRHDAFAEIIVREAGKTIVQARKEVLRCVNTLKLSAEEAKRNAGEIVPFDAYTGSEQRQGWFTRDPLGIITAITPYNDPLNLVAHKLGPAIAGGNAVMLKPSNLTPFSAIKLVGALREAGLPEEVITISHGDRELVTAMIAAREVRMVSFTGGFATGEAISRAAGLKKLAMELGGNAPVIVMNDCDFDKAVEGCVSGAFWAAGQNCIGAQRILIQSELYGRFRDAFVAATKKLKAGDPLQEDTDVGPMISKQVAERTEAAVNEAIKAGATLLCGNYREGSLYHPTVLEGTPLTCRLWHEEVFAPVVMLAPFDTLDKGIEMANDPDYSLHAGIFTNDLNVALEAANRIEVGGVMINDSSDYRFDAMPFGGFKYGSMGREGVRFAYEDMTQPKVVCINRG.

The disordered stretch occupies residues 14 to 41 (MKPERGRRSPLPRRPTRPPDERSSGIGN). 266–271 (GGFATG) is an NADP(+) binding site. Catalysis depends on residues Glu286 and Cys320.

Belongs to the aldehyde dehydrogenase family.

It functions in the pathway amino-acid degradation; 4-aminobutanoate degradation. In terms of biological role, could be a succinate-semialdehyde dehydrogenase (NADP(+)). This chain is Putative aldehyde-dehydrogenase-like protein y4uC, found in Sinorhizobium fredii (strain NBRC 101917 / NGR234).